The sequence spans 88 residues: Cytochrome c oxidase subunit 6B2 (88 aa).

Residues 29 to 75 (TRNCYQNFLDYHRCIKTMNRRGKSTQPCEYYFRVYHSLCPISWVQRW) enclose the CHCH domain. The Cx9C motif motif lies at 32–42 (CYQNFLDYHRC). 2 disulfide bridges follow: Cys32–Cys67 and Cys42–Cys56. The short motif at 56–67 (CEYYFRVYHSLC) is the Cx10C motif element.

Belongs to the cytochrome c oxidase subunit 6B family. As to quaternary structure, component of the cytochrome c oxidase (complex IV, CIV), a multisubunit enzyme composed of 14 subunits. The complex is composed of a catalytic core of 3 subunits MT-CO1, MT-CO2 and MT-CO3, encoded in the mitochondrial DNA, and 11 supernumerary subunits COX4I1 (or COX4I2), COX5A, COX5B, COX6A2 (or COX6A1), COX6B1 (or COX6B2), COX6C, COX7A1 (or COX7A2), COX7B, COX7C, COX8B and NDUFA4, which are encoded in the nuclear genome. The complex exists as a monomer or a dimer and forms supercomplexes (SCs) in the inner mitochondrial membrane with NADH-ubiquinone oxidoreductase (complex I, CI) and ubiquinol-cytochrome c oxidoreductase (cytochrome b-c1 complex, complex III, CIII), resulting in different assemblies (supercomplex SCI(1)III(2)IV(1) and megacomplex MCI(2)III(2)IV(2)). As to expression, testis specific.

It is found in the mitochondrion inner membrane. It participates in energy metabolism; oxidative phosphorylation. Component of the cytochrome c oxidase, the last enzyme in the mitochondrial electron transport chain which drives oxidative phosphorylation. The respiratory chain contains 3 multisubunit complexes succinate dehydrogenase (complex II, CII), ubiquinol-cytochrome c oxidoreductase (cytochrome b-c1 complex, complex III, CIII) and cytochrome c oxidase (complex IV, CIV), that cooperate to transfer electrons derived from NADH and succinate to molecular oxygen, creating an electrochemical gradient over the inner membrane that drives transmembrane transport and the ATP synthase. Cytochrome c oxidase is the component of the respiratory chain that catalyzes the reduction of oxygen to water. Electrons originating from reduced cytochrome c in the intermembrane space (IMS) are transferred via the dinuclear copper A center (CU(A)) of subunit 2 and heme A of subunit 1 to the active site in subunit 1, a binuclear center (BNC) formed by heme A3 and copper B (CU(B)). The BNC reduces molecular oxygen to 2 water molecules using 4 electrons from cytochrome c in the IMS and 4 protons from the mitochondrial matrix. The protein is Cytochrome c oxidase subunit 6B2 (COX6B2) of Bos taurus (Bovine).